The primary structure comprises 1035 residues: Kinesin-like protein KIN-4A (1035 aa).

Residues 11–370 form the Kinesin motor domain; that stretch reads SVKVAVHIRP…LKYANRARNI (360 aa). 90-97 is an ATP binding site; sequence GQTGSGKT. Coiled coils occupy residues 408-436, 504-707, and 881-911; these read CAEVQALKERIVWLETANEELCRELHEYR, QNSM…RKSS, and KEIVGLLRQSELRRKEAEKELKLREQAIATS. The disordered stretch occupies residues 704-724; the sequence is RKSSPREHSAGTNGFGTNGQT.

This sequence belongs to the TRAFAC class myosin-kinesin ATPase superfamily. Kinesin family. KIN-4 subfamily. In terms of assembly, homodimer. In terms of tissue distribution, expressed in stems and flowers. Detected in cells undergoing secondary wall deposition including developing interfascicular fibers and xylem cells, but also in dividing cells and expanding/elongating parenchyma cells.

It localises to the cytoplasm. The protein localises to the cytoskeleton. Its function is as follows. Kinesin-like motor protein involved in the control of the oriented deposition of cellulose microfibrils. Its motor activity is directed toward the microtubule's plus end. It possesses the potential to drive long-distance transport of cargo along cortical microtubules. Regulates cell wall mechanics during cell elongation, by the regulation of primary and secondary walls deposition. Contributes to cortical microtubule-mediated trafficking of cell wall components. The sequence is that of Kinesin-like protein KIN-4A from Arabidopsis thaliana (Mouse-ear cress).